The chain runs to 459 residues: MGKEKTHINIVVIGHVDSGKSTTTGHLIYKCGGIDKRTIEKFEKEAQEMGKGSFKYAWVLDKLKAERERGITIDIALWKFETAKFYVTIIDAPGHRDFIKKMITGTSQADCAVLVVACGTGEFEAGISKNGQTREHALLAQTLGVKQMIVACNKMDSTEPPFSEKRFEEIITEVKSFIKKIGYNPATIPFVPISGFNGDNMLEPSANMSWYKGWSVERKEGNASGKTLLEALDCIIPPQRPTDRPLRLPLQDVYKIGGIGTVPVGRVETGVIKPGMVVTFAPQNVTTEVKSVEMHHESLPEAQPGDNVGFNVKNVSVKDIRRGSVCSDSKNDPAKESKSFTAQVIVMNHPGQIGAGYTPVLDCHTAHIACKFAELKEKVDRRTGKKVEDLPKFLKSGDAGIVELIPTKPLCVEAFTDYAPLGRFAVRDMRQTVAVGVIKGVTKDDGSGGKVTKSAAKKK.

Positions 5-242 (KTHINIVVIG…DCIIPPQRPT (238 aa)) constitute a tr-type G domain. The G1 stretch occupies residues 14 to 21 (GHVDSGKS). The segment at 70 to 74 (GITID) is G2. The segment at 91-94 (DAPG) is G3. The segment at 153–156 (NKMD) is G4. A G5 region spans residues 194–196 (SGF). Residues Glu301 and Glu374 each carry the 5-glutamyl glycerylphosphorylethanolamine modification.

The protein belongs to the TRAFAC class translation factor GTPase superfamily. Classic translation factor GTPase family. EF-Tu/EF-1A subfamily.

Its subcellular location is the cytoplasm. Its function is as follows. This protein promotes the GTP-dependent binding of aminoacyl-tRNA to the A-site of ribosomes during protein biosynthesis. This is Elongation factor 1-alpha 1 (eft-1) from Oscheius tipulae.